A 194-amino-acid polypeptide reads, in one-letter code: uncharacterized protein (194 aa).

This is an uncharacterized protein from Acanthamoeba polyphaga (Amoeba).